The primary structure comprises 160 residues: Peptidyl-prolyl cis-trans isomerase CYP18-1 (160 aa).

In terms of domain architecture, PPIase cyclophilin-type spans 3–153 (VTLHTNLGDI…AEIRLNRVTI (151 aa)).

The protein belongs to the cyclophilin-type PPIase family. In terms of tissue distribution, ubiquitous.

It is found in the cytoplasm. It carries out the reaction [protein]-peptidylproline (omega=180) = [protein]-peptidylproline (omega=0). In terms of biological role, PPIases accelerate the folding of proteins. It catalyzes the cis-trans isomerization of proline imidic peptide bonds in oligopeptides. This chain is Peptidyl-prolyl cis-trans isomerase CYP18-1 (CYP18-1), found in Arabidopsis thaliana (Mouse-ear cress).